The sequence spans 547 residues: Inositol-tetrakisphosphate 1-kinase 6 (547 aa).

Residue Lys-263 participates in 1D-myo-inositol 1,3,4-trisphosphate binding. Residues Arg-317 and Lys-370 each coordinate ATP. Residues 327 to 539 (LEGLSAEGRP…FWDAIKQSYE (213 aa)) enclose the ATP-grasp domain. 1D-myo-inositol 1,3,4-trisphosphate is bound by residues His-381 and Lys-415. ATP-binding positions include 404–415 (QEYIDHGSKIFK), Ser-430, and Ser-450. Mg(2+)-binding residues include Asp-497, Asp-511, and Asn-513. The 1D-myo-inositol 1,3,4-trisphosphate site is built by Asn-513 and Ser-517.

Belongs to the ITPK1 family. Monomer. Requires Mg(2+) as cofactor. Highly expressed in embryos and at lower levels in roots, leaves, flowers and anthers.

It carries out the reaction 1D-myo-inositol 3,4,5,6-tetrakisphosphate + ATP = 1D-myo-inositol 1,3,4,5,6-pentakisphosphate + ADP + H(+). It catalyses the reaction 1D-myo-inositol 1,3,4-trisphosphate + ATP = 1D-myo-inositol 1,3,4,5-tetrakisphosphate + ADP + H(+). The catalysed reaction is 1D-myo-inositol 1,3,4-trisphosphate + ATP = 1D-myo-inositol 1,3,4,6-tetrakisphosphate + ADP + H(+). Kinase that can phosphorylate various inositol polyphosphate such as Ins(3,4,5,6)P4 or Ins(1,3,4)P3 and participates in phytic acid biosynthesis in developing seeds. Phytic acid is the primary storage form of phosphorus in cereal grains and other plant seeds. The sequence is that of Inositol-tetrakisphosphate 1-kinase 6 (ITPK6) from Oryza sativa subsp. japonica (Rice).